The chain runs to 486 residues: Serine/threonine-protein kinase 4 (486 aa).

In terms of domain architecture, Protein kinase spans 29 to 280; that stretch reads FDVLEKLGEG…AIQLLQHPFV (252 aa). Residues 35 to 43 and lysine 58 each bind ATP; that span reads LGEGSYGSV. Aspartate 148 acts as the Proton acceptor in catalysis. The residue at position 182 (threonine 182) is a Phosphothreonine; by autocatalysis. Residues 288–324 are a coiled coil; it reads ILRDLINEAMDIKLKRQEAQQRELDQEDEENSEEDET. The interval 305 to 332 is disordered; that stretch reads EAQQRELDQEDEENSEEDETDSGTMVRA. Over residues 312–325 the composition is skewed to acidic residues; sequence DQEDEENSEEDETD. In terms of domain architecture, SARAH spans 432-479; that stretch reads YEFLKTWSVDELQRRLSALDPMMEQEIEEIRQKYQSKRQPILDAIEAK.

The protein belongs to the protein kinase superfamily. STE Ser/Thr protein kinase family. STE20 subfamily. In terms of assembly, homodimer; mediated via the coiled-coil region. Mg(2+) serves as cofactor. Post-translationally, proteolytically cleaved by caspase-3 during apoptosis at Asp-325 resulting in a 37 kDa form. Proteolytic cleavage results in kinase activation and nuclear translocation of the truncated form (MST1/N).

The protein resides in the cytoplasm. It is found in the nucleus. It catalyses the reaction L-seryl-[protein] + ATP = O-phospho-L-seryl-[protein] + ADP + H(+). The catalysed reaction is L-threonyl-[protein] + ATP = O-phospho-L-threonyl-[protein] + ADP + H(+). With respect to regulation, the C-terminal non-catalytic region inhibits the kinase activity, the enzyme is activated by caspase-cleavage. Homodimerization and autophosphorylation of Thr-182 is also required for full activation. In terms of biological role, stress-activated, pro-apoptotic kinase which, following caspase-cleavage, enters the nucleus and induces chromatin condensation followed by internucleosomal DNA fragmentation. Key component of the Hippo signaling pathway which plays a pivotal role in organ size control and tumor suppression by restricting proliferation and promoting apoptosis. The core of this pathway is composed of a kinase cascade wherein STK3/MST2 and STK4/MST1, in complex with its regulatory protein SAV1, phosphorylates and activates LATS1/2 in complex with its regulatory protein MOB1, which in turn phosphorylates and inactivates YAP1 oncoprotein and WWTR1/TAZ. Phosphorylation of YAP1 by LATS2 inhibits its translocation into the nucleus to regulate cellular genes important for cell proliferation, cell death, and cell migration. Phosphorylates 'Ser-14' of histone H2B (H2BS14ph) during apoptosis. Phosphorylates FOXO3 upon oxidative stress, which results in its nuclear translocation and cell death initiation. The protein is Serine/threonine-protein kinase 4 (STK4) of Gallus gallus (Chicken).